Reading from the N-terminus, the 375-residue chain is MKNKLFIILIIFIILKIVICQNTTPSKLIPQQQQKQKQQQTQPHHHHHHHQQHQQHQQQHQPNQQIKQQQQPQQQQLQQQQKQLEQQQQQQKIQQQQQPQQQLLQQQQHFPNSQNVIKTPPHHTQQRVPHHHGPNGAPHHHGPNGAPHHHGPNGAPHYHSPNAAPHSGHNTQGHVQTNHVNNINKNNINNNNNNNNNNNNNNNNNNNNNINDNKNIRNNIPSPATKDPNPFINNKPKVNSNTPQPFPHPPHNHNLVNGGRPVIHKQIPPHHHIPMGGGNIQSNQHFQGFQPSQVFTGSQPSSNSASPILFNSENPFYKEEYYKHPEKQVERKITPIMVLYILLASTMVIQLFIMVFKQVKHIREINAKTTMESLL.

An N-terminal signal peptide occupies residues 1-20 (MKNKLFIILIIFIILKIVIC). At 21 to 335 (QNTTPSKLIP…EKQVERKITP (315 aa)) the chain is on the extracellular side. Over residues 30-42 (PQQQQKQKQQQTQ) the composition is skewed to low complexity. Disordered stretches follow at residues 30 to 74 (PQQQ…QPQQ) and 113 to 253 (SQNV…PHNH). Residues 43–53 (PHHHHHHHQQH) are compositionally biased toward basic residues. Low complexity predominate over residues 54–74 (QQHQQQHQPNQQIKQQQQPQQ). Positions 120 to 151 (PPHHTQQRVPHHHGPNGAPHHHGPNGAPHHHG) are enriched in basic residues. A compositionally biased stretch (polar residues) spans 168-180 (GHNTQGHVQTNHV). Positions 181–220 (NNINKNNINNNNNNNNNNNNNNNNNNNNNINDNKNIRNNI) are enriched in low complexity. Residues 336 to 356 (IMVLYILLASTMVIQLFIMVF) form a helical membrane-spanning segment. Topologically, residues 357–375 (KQVKHIREINAKTTMESLL) are cytoplasmic.

The protein resides in the membrane. This is an uncharacterized protein from Dictyostelium discoideum (Social amoeba).